The following is a 127-amino-acid chain: UPF0325 protein VS_2356 (127 aa).

This sequence belongs to the UPF0325 family.

In Vibrio atlanticus (strain LGP32) (Vibrio splendidus (strain Mel32)), this protein is UPF0325 protein VS_2356.